The sequence spans 239 residues: 7-cyano-7-deazaguanine synthase (239 aa).

8–18 (FSGGLDSTACL) is a binding site for ATP. Zn(2+) contacts are provided by Cys194, Cys209, Cys212, and Cys215.

This sequence belongs to the QueC family. Requires Zn(2+) as cofactor.

It catalyses the reaction 7-carboxy-7-deazaguanine + NH4(+) + ATP = 7-cyano-7-deazaguanine + ADP + phosphate + H2O + H(+). Its pathway is purine metabolism; 7-cyano-7-deazaguanine biosynthesis. In terms of biological role, catalyzes the ATP-dependent conversion of 7-carboxy-7-deazaguanine (CDG) to 7-cyano-7-deazaguanine (preQ(0)). This is 7-cyano-7-deazaguanine synthase from Pyrococcus horikoshii (strain ATCC 700860 / DSM 12428 / JCM 9974 / NBRC 100139 / OT-3).